Here is a 101-residue protein sequence, read N- to C-terminus: Transcription and mRNA export factor SUS1 (101 aa).

Belongs to the ENY2 family. Component of the nuclear pore complex (NPC)-associated TREX-2 complex (transcription and export complex 2), composed of at least SUS1, SAC3, THP1, SEM1, and CDC31. TREX-2 contains 2 SUS1 chains. The TREX-2 complex interacts with the nucleoporin NUP1. Component of the 1.8 MDa SAGA transcription coactivator-HAT complex. SAGA is built of 5 distinct domains with specialized functions. Within the SAGA complex, SUS1, SGF11, SGF73 and UBP8 form an additional subcomplex of SAGA called the DUB module (deubiquitination module). Interacts directly with THP1, SAC3, SGF11, and with the RNA polymerase II.

Its subcellular location is the nucleus. It is found in the nucleoplasm. It localises to the cytoplasm. The protein localises to the P-body. Involved in mRNA export coupled transcription activation by association with both the TREX-2 and the SAGA complexes. At the promoters, SAGA is required for recruitment of the basal transcription machinery. It influences RNA polymerase II transcriptional activity through different activities such as TBP interaction and promoter selectivity, interaction with transcription activators, and chromatin modification through histone acetylation and deubiquitination. Within the SAGA complex, participates in a subcomplex required for deubiquitination of H2B and for the maintenance of steady-state H3 methylation levels. The TREX-2 complex functions in docking export-competent ribonucleoprotein particles (mRNPs) to the nuclear entrance of the nuclear pore complex (nuclear basket). TREX-2 participates in mRNA export and accurate chromatin positioning in the nucleus by tethering genes to the nuclear periphery. May also be involved in cytoplasmic mRNA decay by interaction with components of P-bodies. The sequence is that of Transcription and mRNA export factor SUS1 from Debaryomyces hansenii (strain ATCC 36239 / CBS 767 / BCRC 21394 / JCM 1990 / NBRC 0083 / IGC 2968) (Yeast).